A 731-amino-acid polypeptide reads, in one-letter code: MVVEHPEFLKAGKEPGLQIWRVEKFDLVPVPPNLYGDFFTGDAYVILKTVQLRNGNLQYDLHYWLGNECSQDESGAAAIFTVQLDDYLNGRAVQHREVQGFESATFLGYFKSGLKYKKGGVASGFKHVVPNEVVVQRLFQVKGRRVVRATEVPVSWESFNNGDCFILDLGNDIYQWCGSSSNRFERLKATQVSKGIRDNERSGRARVHVSEEGAEPEAMLEVLGPKPALPAGTEDTAKEDAANRKLAKLYKVSNGAGTMSVSLVADENPFAQGALRSEDCFILDHGKDGKIFVWKGRQANTEERKAALKTASDFISKMDYPRQTQVSVLPEGGETPLFKQFFKNWRDPDQTDGPGLSYLSSHIANVERVPFDAATLHTSTAMAAQHGMDDDGRGQKQIWRIEGSDKVPVDPATYGQFYGGDSYIILYNYRHGGRQGQIIYNWQGAQSTQDEVAASAILTAQLDEELGGTPVRSRVVQGKEPAHLMSLFGGKPMIIYRGGTSREGGQTAPASTRLFQVRASSSGATRAVEVMPKAGALNSNDAFVLKTPSAAYLWVGAGASEAEKTGALELLRVLRAQPVQVAEGSEPDSFWEALGGKAAYRTSPRLKDKKMDAHPPRLFACSNKIGRFVIEEVPGELMQEDLATDDVMLLDTWDQVFVWVGKDSQEEEKTEALTSAKRYIETDPANRDRRTPITVVKQGFEPPSFVGWFLGWDDNYWSVDPLDRALAELAA.

The actin-severing stretch occupies residues 2–125 (VVEHPEFLKA…YKKGGVASGF (124 aa)). One copy of the Gelsolin-like 1 repeat lies at 25–107 (FDLVPVPPNL…VQGFESATFL (83 aa)). Residue Tyr-35 is modified to Phosphotyrosine. 6 residues coordinate Ca(2+): Gly-41, Asp-42, Glu-73, Asp-85, Gly-90, and Ala-92. An actin-actin interfilament contact point region spans residues 72–75 (DESG). Position 111–118 (111–118 (KSGLKYKK)) interacts with a 1,2-diacyl-sn-glycero-3-phospho-(1D-myo-inositol-4,5-bisphosphate). Ca(2+) is bound at residue Val-121. Position 137–145 (137–145 (RLFQVKGRR)) interacts with a 1,2-diacyl-sn-glycero-3-phospho-(1D-myo-inositol-4,5-bisphosphate). One copy of the Gelsolin-like 2 repeat lies at 147 to 219 (VRATEVPVSW…SEEGAEPEAM (73 aa)). Gly-162 and Asp-163 together coordinate Ca(2+). Cys-164 and Cys-177 form a disulfide bridge. Glu-185 is a binding site for Ca(2+). Residues 197 to 211 (RDNERSGRARVHVSE) are compositionally biased toward basic and acidic residues. Residues 197–216 (RDNERSGRARVHVSEEGAEP) are disordered. Ca(2+)-binding residues include Asp-235, Glu-278, Asp-279, and Glu-303. A Gelsolin-like 3 repeat occupies 266 to 338 (DENPFAQGAL…LPEGGETPLF (73 aa)). Tyr-358 and Tyr-414 each carry phosphotyrosine. The actin-binding, Ca-sensitive stretch occupies residues 383–731 (AAQHGMDDDG…LDRALAELAA (349 aa)). One copy of the Gelsolin-like 4 repeat lies at 404–485 (SDKVPVDPAT…VQGKEPAHLM (82 aa)). 7 residues coordinate Ca(2+): Gly-420, Asp-421, Glu-451, Asp-463, Gly-468, Pro-470, and Thr-500. The stretch at 527-591 (AVEVMPKAGA…AEGSEPDSFW (65 aa)) is one Gelsolin-like 5 repeat. Lys-533 carries the post-translational modification N6-acetyllysine. 2 residues coordinate Ca(2+): Asn-540 and Asp-541. Tyr-552 is subject to Phosphotyrosine. Residue Glu-563 participates in Ca(2+) binding. Tyr-600 carries the phosphotyrosine modification. The Gelsolin-like 6 repeat unit spans residues 630–705 (IEEVPGELMQ…VKQGFEPPSF (76 aa)). The Ca(2+) site is built by Asp-645, Asp-646, and Glu-668. Thr-691 bears the Phosphothreonine mark.

Belongs to the villin/gelsolin family. In terms of assembly, binds to actin and to fibronectin. Identified in a complex composed of ACTA1, COBL, GSN and TMSB4X. Interacts with the inactive form of EIF2AK2/PKR. Interacts with FLII.

It is found in the cytoplasm. The protein localises to the cytoskeleton. Its function is as follows. Calcium-regulated, actin-modulating protein that binds to the plus (or barbed) ends of actin monomers or filaments, preventing monomer exchange (end-blocking or capping). It can promote the assembly of monomers into filaments (nucleation) as well as sever filaments already formed. Plays a role in ciliogenesis. This chain is Gelsolin (GSN), found in Bos taurus (Bovine).